The sequence spans 291 residues: Phosphatidylglycerol--prolipoprotein diacylglyceryl transferase (291 aa).

7 helical membrane passes run 21-41 (VSLH…MWLA), 60-80 (LLYA…VLFY), 96-116 (WDGG…MIIF), 130-150 (FIAP…FING), 198-218 (SQLY…NLFI), 225-245 (GSVS…VEFF), and 260-280 (ISMG…MMVW). Position 143 (Arg143) interacts with a 1,2-diacyl-sn-glycero-3-phospho-(1'-sn-glycerol).

Belongs to the Lgt family.

It localises to the cell inner membrane. The catalysed reaction is L-cysteinyl-[prolipoprotein] + a 1,2-diacyl-sn-glycero-3-phospho-(1'-sn-glycerol) = an S-1,2-diacyl-sn-glyceryl-L-cysteinyl-[prolipoprotein] + sn-glycerol 1-phosphate + H(+). The protein operates within protein modification; lipoprotein biosynthesis (diacylglyceryl transfer). Functionally, catalyzes the transfer of the diacylglyceryl group from phosphatidylglycerol to the sulfhydryl group of the N-terminal cysteine of a prolipoprotein, the first step in the formation of mature lipoproteins. In Klebsiella pneumoniae (strain 342), this protein is Phosphatidylglycerol--prolipoprotein diacylglyceryl transferase.